The chain runs to 1462 residues: Tyrosine-protein phosphatase 69D (1462 aa).

Positions 1-28 (MALLYRRMSMLLNIILAYIFLCAICVQG) are cleaved as a signal peptide. Ig-like C2-type domains lie at 29-125 (SVKQ…TEFQ) and 131-230 (PSKV…KEIT). Over 29-805 (SVKQEWAEIG…MDYYLSIGVK (777 aa)) the chain is Extracellular. Residues asparagine 40, asparagine 58, asparagine 64, asparagine 85, asparagine 109, asparagine 119, asparagine 162, asparagine 191, asparagine 196, asparagine 209, asparagine 255, asparagine 288, asparagine 302, asparagine 429, asparagine 442, asparagine 451, asparagine 516, asparagine 613, asparagine 701, and asparagine 755 are each glycosylated (N-linked (GlcNAc...) asparagine). A disulfide bridge links cysteine 45 with cysteine 112. A disulfide bond links cysteine 154 and cysteine 214. Fibronectin type-III domains lie at 237–332 (PQVS…TLSY), 334–435 (PIFI…TMDG), and 439–547 (KPTN…TPDA). A helical membrane pass occupies residues 806-823 (AGAVLLGVILVFIVLWVF). The Cytoplasmic portion of the chain corresponds to 824–1462 (HHKKTKNELQ…LHHIAESTLD (639 aa)). 2 Tyrosine-protein phosphatase domains span residues 893–1156 (FLRE…LLDT) and 1187–1450 (LEVE…IINY). Active-site phosphocysteine intermediate residues include cysteine 1097 and cysteine 1391.

This sequence belongs to the protein-tyrosine phosphatase family. Receptor class subfamily.

The protein localises to the membrane. The enzyme catalyses O-phospho-L-tyrosyl-[protein] + H2O = L-tyrosyl-[protein] + phosphate. In terms of biological role, possible cell adhesion receptor. This chain is Tyrosine-protein phosphatase 69D (Ptp69D), found in Drosophila melanogaster (Fruit fly).